A 358-amino-acid polypeptide reads, in one-letter code: 2'-5'-oligoadenylate synthase 1A (358 aa).

Residues 14-61 (DKFIEVYLLPNTSFRDDVKSAINVLCDFLKERCFRDTVHPVRVSKVVK) form an interaction with dsRNA region. Ser64 provides a ligand contact to ATP. 3 residues coordinate Mg(2+): Asp76, Asp78, and Asp149. Residues 201-211 (QRPTKLKSLIR) are interaction with dsRNA. ATP-binding residues include Arg211, Lys214, and Gln231.

This sequence belongs to the 2-5A synthase family. In terms of assembly, monomer. Homotetramer. Interacts with OAS1D. It depends on Mg(2+) as a cofactor.

The protein resides in the cytoplasm. The protein localises to the mitochondrion. It is found in the nucleus. It localises to the microsome. Its subcellular location is the endoplasmic reticulum. It catalyses the reaction 3 ATP = 5'-triphosphoadenylyl-(2'-&gt;5')-adenylyl-(2'-&gt;5')-adenosine + 2 diphosphate. Produced as a latent enzyme which is activated by dsRNA generated during the course of viral infection. The dsRNA activator must be at least 15 nucleotides long, and no modification of the 2'-hydroxyl group is tolerated. ssRNA or dsDNA do not act as activators. Its function is as follows. Interferon-induced, dsRNA-activated antiviral enzyme which plays a critical role in cellular innate antiviral response. In addition, it may also play a role in other cellular processes such as apoptosis, cell growth, differentiation and gene regulation. Synthesizes higher oligomers of 2'-5'-oligoadenylates (2-5A) from ATP which then bind to the inactive monomeric form of ribonuclease L (RNase L) leading to its dimerization and subsequent activation. Activation of RNase L leads to degradation of cellular as well as viral RNA, resulting in the inhibition of protein synthesis, thus terminating viral replication. Can mediate the antiviral effect via the classical RNase L-dependent pathway or an alternative antiviral pathway independent of RNase L. The sequence is that of 2'-5'-oligoadenylate synthase 1A (Oas1a) from Rattus norvegicus (Rat).